The primary structure comprises 163 residues: C-type lectin lectoxin-Lio1 (163 aa).

Residues Met1–Ala21 form the signal peptide. Disulfide bonds link Cys25–Cys36, Cys53–Cys152, and Cys127–Cys144. One can recognise a C-type lectin domain in the interval Ser32–Lys153. A Mannose-binding motif is present at residues Glu117–Asn119. Ca(2+)-binding residues include Glu125 and Asp141.

The protein belongs to the true venom lectin family. In terms of tissue distribution, expressed by the venom gland.

The protein localises to the secreted. Mannose-binding lectin which recognizes specific carbohydrate structures and agglutinates a variety of animal cells by binding to cell-surface glycoproteins and glycolipids. May be a calcium-dependent lectin. In Erythrolamprus poecilogyrus (Water snake), this protein is C-type lectin lectoxin-Lio1.